A 26-amino-acid chain; its full sequence is Somatostatin-1 (26 aa).

A disulfide bond links cysteine 15 and cysteine 26.

The protein belongs to the somatostatin family.

It is found in the secreted. In terms of biological role, somatostatin inhibits the release of somatotropin. The protein is Somatostatin-1 (sst1) of Amia calva (Bowfin).